Consider the following 244-residue polypeptide: Adiponectin (244 aa).

A signal peptide spans Met1–Gln18. Residues Thr21 and Thr22 are each glycosylated (O-linked (GalNAc...) threonine). 5-hydroxylysine is present on Lys33. The residue at position 36 (Cys36) is an S-(2-succinyl)cysteine. The tract at residues Met40 to Lys101 is disordered. Positions Gly42–Gly107 constitute a Collagen-like domain. 4-hydroxyproline occurs at positions 44, 47, and 53. Positions Arg55–Asp70 are enriched in basic and acidic residues. Lys65 and Lys68 each carry 5-hydroxylysine. 2 O-linked (Gal...) hydroxylysine; partial glycosylation sites follow: Lys65 and Lys68. Residues Pro71 and Pro76 each carry the 4-hydroxyproline; partial modification. Lys77 carries the 5-hydroxylysine modification. Lys77 carries O-linked (Gal...) hydroxylysine; partial glycosylation. At Pro91 the chain carries 4-hydroxyproline. Pro95 carries the post-translational modification 4-hydroxyproline; partial. Lys101 is modified (5-hydroxylysine). A glycan (O-linked (Gal...) hydroxylysine; partial) is linked at Lys101. A C1q domain is found at Ala108–Asn244.

As to quaternary structure, homomultimer. Forms trimers, hexamers and 12- to 18-mers. The trimers (low molecular weight complexes / LMW) are assembled via non-covalent interactions of the collagen-like domains in a triple helix and hydrophobic interactions within the globular C1q domain. Several trimers can associate to form disulfide-linked hexamers (middle molecular weight complexes / MMW) and larger complexes (higher molecular weight / HMW). The HMW-complex assembly is also modulated by the degree of lysine hydroxylation and glycosylation. LMW, MMW and HMW complexes bind to HBEGF, MMW and HMW complexes bind to PDGFB, and HMW complex binds to FGF2. Interacts with CTRP9 via the C1q domain (heterotrimeric complex). In terms of processing, HMW complexes are more extensively glycosylated than smaller oligomers. Hydroxylation and glycosylation of the lysine residues within the collagen-like domain of adiponectin seem to be critically involved in regulating the formation and/or secretion of HMW complexes and consequently contribute to the insulin-sensitizing activity of adiponectin in hepatocytes. Post-translationally, O-glycosylated. Not N-glycosylated. O-linked glycans on hydroxylysines consist of Glc-Gal disaccharides bound to the oxygen atom of post-translationally added hydroxyl groups. Sialylated to varying degrees depending on tissue. Thr-22 appears to be the major site of sialylation. Higher sialylation found in SGBS adipocytes than in HEK fibroblasts. Sialylation is not required neither for heterodimerization nor for secretion. Not sialylated on the glycosylated hydroxylysines. Desialylated forms are rapidly cleared from the circulation. Succination of Cys-36 by the Krebs cycle intermediate fumarate, which leads to S-(2-succinyl)cysteine residues, inhibits polymerization and secretion of adiponectin. Adiponectin is a major target for succination in both adipocytes and adipose tissue of diabetic mammals. It was proposed that succination of proteins is a biomarker of mitochondrial stress and accumulation of Krebs cycle intermediates in adipose tissue in diabetes and that succination of adiponectin may contribute to the decrease in plasma adiponectin in diabetes. As to expression, synthesized exclusively by adipocytes and secreted into plasma.

Its subcellular location is the secreted. With respect to regulation, polymerization and secretion of adiponectin is inhibited by succination of cysteine residues by the Krebs cycle intermediate fumarate, which leads to S-(2-succinyl)cysteine residues. Its function is as follows. Important adipokine involved in the control of fat metabolism and insulin sensitivity, with direct anti-diabetic, anti-atherogenic and anti-inflammatory activities. Stimulates AMPK phosphorylation and activation in the liver and the skeletal muscle, enhancing glucose utilization and fatty-acid combustion. Antagonizes TNF-alpha by negatively regulating its expression in various tissues such as liver and macrophages, and also by counteracting its effects. Inhibits endothelial NF-kappa-B signaling through a cAMP-dependent pathway. May play a role in cell growth, angiogenesis and tissue remodeling by binding and sequestering various growth factors with distinct binding affinities, depending on the type of complex, LMW, MMW or HMW. The protein is Adiponectin (ADIPOQ) of Homo sapiens (Human).